The primary structure comprises 422 residues: Gamma-glutamyl phosphate reductase (422 aa).

It belongs to the gamma-glutamyl phosphate reductase family.

It localises to the cytoplasm. The catalysed reaction is L-glutamate 5-semialdehyde + phosphate + NADP(+) = L-glutamyl 5-phosphate + NADPH + H(+). Its pathway is amino-acid biosynthesis; L-proline biosynthesis; L-glutamate 5-semialdehyde from L-glutamate: step 2/2. Catalyzes the NADPH-dependent reduction of L-glutamate 5-phosphate into L-glutamate 5-semialdehyde and phosphate. The product spontaneously undergoes cyclization to form 1-pyrroline-5-carboxylate. The polypeptide is Gamma-glutamyl phosphate reductase (Nitrosomonas europaea (strain ATCC 19718 / CIP 103999 / KCTC 2705 / NBRC 14298)).